We begin with the raw amino-acid sequence, 313 residues long: Biotin synthase (313 aa).

Residues 37–263 (YYGKKVKLNM…INPTKEIRIA (227 aa)) form the Radical SAM core domain. 3 residues coordinate [4Fe-4S] cluster: Cys55, Cys59, and Cys62. [2Fe-2S] cluster is bound by residues Cys98, Cys131, Cys191, and Arg261.

It belongs to the radical SAM superfamily. Biotin synthase family. Homodimer. The cofactor is [4Fe-4S] cluster. [2Fe-2S] cluster serves as cofactor.

It carries out the reaction (4R,5S)-dethiobiotin + (sulfur carrier)-SH + 2 reduced [2Fe-2S]-[ferredoxin] + 2 S-adenosyl-L-methionine = (sulfur carrier)-H + biotin + 2 5'-deoxyadenosine + 2 L-methionine + 2 oxidized [2Fe-2S]-[ferredoxin]. The protein operates within cofactor biosynthesis; biotin biosynthesis; biotin from 7,8-diaminononanoate: step 2/2. Catalyzes the conversion of dethiobiotin (DTB) to biotin by the insertion of a sulfur atom into dethiobiotin via a radical-based mechanism. The chain is Biotin synthase from Staphylococcus epidermidis (strain ATCC 12228 / FDA PCI 1200).